We begin with the raw amino-acid sequence, 427 residues long: Trigger factor (427 aa).

In terms of domain architecture, PPIase FKBP-type spans 163–248; it reads GDTVVIDFVG…IHEVKAKEVP (86 aa).

It belongs to the FKBP-type PPIase family. Tig subfamily.

Its subcellular location is the cytoplasm. It catalyses the reaction [protein]-peptidylproline (omega=180) = [protein]-peptidylproline (omega=0). In terms of biological role, involved in protein export. Acts as a chaperone by maintaining the newly synthesized protein in an open conformation. Functions as a peptidyl-prolyl cis-trans isomerase. In Streptococcus pneumoniae (strain JJA), this protein is Trigger factor.